Consider the following 423-residue polypeptide: Serine--tRNA ligase (423 aa).

231–233 (TGE) contacts L-serine. ATP is bound at residue 262 to 264 (RQE). Glu-285 serves as a coordination point for L-serine. 349–352 (EISS) contributes to the ATP binding site. L-serine is bound at residue Ser-385.

Belongs to the class-II aminoacyl-tRNA synthetase family. Type-1 seryl-tRNA synthetase subfamily. In terms of assembly, homodimer. The tRNA molecule binds across the dimer.

It is found in the cytoplasm. The enzyme catalyses tRNA(Ser) + L-serine + ATP = L-seryl-tRNA(Ser) + AMP + diphosphate + H(+). It catalyses the reaction tRNA(Sec) + L-serine + ATP = L-seryl-tRNA(Sec) + AMP + diphosphate + H(+). It participates in aminoacyl-tRNA biosynthesis; selenocysteinyl-tRNA(Sec) biosynthesis; L-seryl-tRNA(Sec) from L-serine and tRNA(Sec): step 1/1. Functionally, catalyzes the attachment of serine to tRNA(Ser). Is also able to aminoacylate tRNA(Sec) with serine, to form the misacylated tRNA L-seryl-tRNA(Sec), which will be further converted into selenocysteinyl-tRNA(Sec). This is Serine--tRNA ligase from Phytoplasma mali (strain AT).